A 1236-amino-acid chain; its full sequence is DNA-directed RNA polymerase subunit beta (1236 aa).

A disordered region spans residues 1185 to 1236 (IEGSEDYTEPKQPNDNYLEEEENKDKESDYDEDLNFDDLTKGLQLDDFNDEH). Acidic residues predominate over residues 1201–1220 (YLEEEENKDKESDYDEDLNF).

The protein belongs to the RNA polymerase beta chain family. As to quaternary structure, the RNAP catalytic core consists of 2 alpha, 1 beta, 1 beta' and 1 omega subunit. When a sigma factor is associated with the core the holoenzyme is formed, which can initiate transcription.

It catalyses the reaction RNA(n) + a ribonucleoside 5'-triphosphate = RNA(n+1) + diphosphate. Its function is as follows. DNA-dependent RNA polymerase catalyzes the transcription of DNA into RNA using the four ribonucleoside triphosphates as substrates. The protein is DNA-directed RNA polymerase subunit beta of Clostridium tetani (strain Massachusetts / E88).